Consider the following 1183-residue polypeptide: Putative ATP-dependent RNA helicase PB1A10.06c (1183 aa).

2 disordered regions span residues 1–92 and 165–315; these read MGRL…KKRL and ETTT…RASR. Positions 60-81 are enriched in basic and acidic residues; the sequence is VPKEERQKRKQELKDQLLKENE. 2 stretches are compositionally biased toward low complexity: residues 165 to 176 and 184 to 196; these read ETTTTKSSTAET and TRSGFGFGFSTGT. Residues 224–251 show a composition bias toward acidic residues; that stretch reads EDPEYDSAEEDYLSTDSEEFSEDSDNSS. Residues 252–270 show a composition bias toward basic and acidic residues; the sequence is EENKDTNEPSTKDAEKTVP. Residues 292–308 show a composition bias toward acidic residues; sequence ENEDFDLETSEDDSSDD. Positions 408–585 constitute a Helicase ATP-binding domain; it reads MEQIFANDVV…KLLFSVPPPI (178 aa). An ATP-binding site is contributed by 421 to 428; sequence GATGSGKT. Residues 522-525 carry the DEAH box motif; it reads DEAH. Residues 611 to 831 form the Helicase C-terminal domain; it reads AFDKVCLIHK…SIVLQMKNMN (221 aa). Acidic residues predominate over residues 673–683; the sequence is EDLQSETEDID. The tract at residues 673–696 is disordered; sequence EDLQSETEDIDQVPTSSSSSVTYD.

The protein belongs to the DEAD box helicase family. DEAH subfamily.

It localises to the nucleus. The protein resides in the nucleolus. It catalyses the reaction ATP + H2O = ADP + phosphate + H(+). The chain is Putative ATP-dependent RNA helicase PB1A10.06c from Schizosaccharomyces pombe (strain 972 / ATCC 24843) (Fission yeast).